The sequence spans 379 residues: Probable malonyl-CoA-acyl carrier protein transacylase, mitochondrial (379 aa).

Residues 1-23 (MLAARRLLRSPRITGALSWSRWS) constitute a mitochondrion transit peptide. Catalysis depends on residues serine 158 and histidine 275.

This sequence belongs to the type II malonyltransferase family.

It localises to the mitochondrion. It carries out the reaction holo-[ACP] + malonyl-CoA = malonyl-[ACP] + CoA. It participates in lipid metabolism; fatty acid biosynthesis. Functionally, catalyzes the transfer of a malonyl moiety from malonyl-CoA to the free thiol group of the phosphopantetheine arm of the ACP protein. This suggests the existence of the biosynthesis of fatty acids in mitochondria. This chain is Probable malonyl-CoA-acyl carrier protein transacylase, mitochondrial, found in Drosophila melanogaster (Fruit fly).